Consider the following 80-residue polypeptide: Trefoil factor 3 (80 aa).

A signal peptide spans Met1–Ala23. Residues Asn30–Leu73 enclose the P-type domain. Intrachain disulfides connect Cys32/Cys58, Cys42/Cys57, and Cys52/Cys69.

Monomer. Homodimer; disulfide-linked.

The protein resides in the secreted. It is found in the extracellular space. Its subcellular location is the extracellular matrix. It localises to the cytoplasm. Its function is as follows. Involved in the maintenance and repair of the intestinal mucosa. Promotes the mobility of epithelial cells in healing processes (motogen). The chain is Trefoil factor 3 (TFF3) from Canis lupus familiaris (Dog).